The following is a 420-amino-acid chain: Threonine aspartase 1 (420 aa).

Residues 1-23 (MTMEKGMSSGEGLPSRSSQVSAG) are disordered. Residue Thr-234 is the Nucleophile of the active site.

The protein belongs to the Ntn-hydrolase family. Intramolecular proteolysis generates 2 subunits, alpha and beta, which reassemble through a non-covalent association to form the fully active enzyme.

In terms of biological role, protease responsible for KMT2A/MLL1 processing and activation. It also activates KMT2D/MLL2. Through substrate activation, it controls the expression of HOXA genes, and the expression of key cell cycle regulators including CCNA1, CCNB1, CCNE1 and CDKN2A. This Homo sapiens (Human) protein is Threonine aspartase 1 (TASP1).